We begin with the raw amino-acid sequence, 299 residues long: Deoxyhypusine hydroxylase (299 aa).

5 HEAT-like PBS-type repeats span residues 54 to 80, 87 to 113, 174 to 200, 205 to 231, and 238 to 264; these read LKHELAFCLGQMRDRAAIPALLGVLQD, VRHEAGEALGAIGDPEVLDVLRRYSED, DRYRAMFALRNLGGRDAVLALADGLRA, FRHEIGYVLGQMQDEACVPQLTAALRS, and VRHECAEALGSIARPSCLETLRAFAQD. Residues His56, His89, and Glu90 each coordinate Fe cation. Residues His207, His240, and Glu241 each coordinate Fe cation.

It belongs to the deoxyhypusine hydroxylase family. It depends on Fe(2+) as a cofactor.

The enzyme catalyses [eIF5A protein]-deoxyhypusine + AH2 + O2 = [eIF5A protein]-hypusine + A + H2O. Its pathway is protein modification; eIF5A hypusination. Catalyzes the hydroxylation of the N(6)-(4-aminobutyl)-L-lysine intermediate produced by deoxyhypusine synthase/DHPS on a critical lysine of the eukaryotic translation initiation factor 5A/eIF-5A. This is the second step of the post-translational modification of that lysine into an unusual amino acid residue named hypusine. Hypusination is unique to mature eIF-5A factor and is essential for its function. The protein is Deoxyhypusine hydroxylase of Gallus gallus (Chicken).